We begin with the raw amino-acid sequence, 79 residues long: ATP synthase subunit beta (79 aa).

The protein belongs to the ATPase alpha/beta chains family. F-type ATPases have 2 components, CF(1) - the catalytic core - and CF(0) - the membrane proton channel. CF(1) has five subunits: alpha(3), beta(3), gamma(1), delta(1), epsilon(1). CF(0) has three main subunits: a(1), b(2) and c(9-12). The alpha and beta chains form an alternating ring which encloses part of the gamma chain. CF(1) is attached to CF(0) by a central stalk formed by the gamma and epsilon chains, while a peripheral stalk is formed by the delta and b chains.

It localises to the cell membrane. It catalyses the reaction ATP + H2O + 4 H(+)(in) = ADP + phosphate + 5 H(+)(out). Produces ATP from ADP in the presence of a proton gradient across the membrane. The catalytic sites are hosted primarily by the beta subunits. In Streptococcus downei (Streptococcus sobrinus), this protein is ATP synthase subunit beta (atpD).